Consider the following 353-residue polypeptide: Rhodopsin (353 aa).

The Extracellular segment spans residues 1-36; sequence MNGTEGPYFYIPMVNTTGIVRSPYEYPQYYLVNPAA. Residues asparagine 2 and asparagine 15 are each glycosylated (N-linked (GlcNAc...) asparagine). The chain crosses the membrane as a helical span at residues 37-61; it reads YAALGAYMFLLILVGFPINFLTLYV. Residues 62-73 are Cytoplasmic-facing; that stretch reads TIEHKKLRTPLN. The chain crosses the membrane as a helical span at residues 74–96; that stretch reads YILLNLAVANLFMVFGGFTTTMY. The Extracellular segment spans residues 97-110; that stretch reads TSMHGYFVLGRLGC. Cysteine 110 and cysteine 187 form a disulfide bridge. Residues 111–133 traverse the membrane as a helical segment; that stretch reads NLEGFFATLGGEIALWSLVVLAI. The short motif at 134–136 is the 'Ionic lock' involved in activated form stabilization element; the sequence is ERW. Residues 134–152 lie on the Cytoplasmic side of the membrane; the sequence is ERWMVVCKPISNFRFGEDH. A helical transmembrane segment spans residues 153–173; that stretch reads AIMGLAFTWVMAAACAVPPLV. Residues 174-202 are Extracellular-facing; that stretch reads GWSRYIPEGMQCSCGIDYYTRAEGFNNES. Asparagine 200 carries an N-linked (GlcNAc...) asparagine glycan. A helical transmembrane segment spans residues 203–224; that stretch reads FVIYMFVCHFLIPLVVVFFCYG. Over 225-252 the chain is Cytoplasmic; the sequence is RLLCAVKEAAAAQQESETTQRAEREVSR. Residues 253–274 traverse the membrane as a helical segment; sequence MVVIMVVAFLICWCPYAGVAWY. Residues 275-286 lie on the Extracellular side of the membrane; that stretch reads IFTHQGSEFGPL. Residues 287-308 form a helical membrane-spanning segment; the sequence is FMTFPAFFAKSSSIYNPMIYIC. Lysine 296 is subject to N6-(retinylidene)lysine. Residues 309 to 353 are Cytoplasmic-facing; it reads MNKQFRHCMITTLCCGKNPFEEEEGASTTSKTEASSVSSSSVSPA. 2 S-palmitoyl cysteine lipidation sites follow: cysteine 322 and cysteine 323. The interval 330–353 is disordered; that stretch reads EEEGASTTSKTEASSVSSSSVSPA. The segment covering 334–353 has biased composition (low complexity); sequence ASTTSKTEASSVSSSSVSPA.

The protein belongs to the G-protein coupled receptor 1 family. Opsin subfamily. Phosphorylated on some or all of the serine and threonine residues present in the C-terminal region. Post-translationally, contains one covalently linked retinal chromophore.

It is found in the membrane. Its subcellular location is the cell projection. It localises to the cilium. The protein localises to the photoreceptor outer segment. Its function is as follows. Photoreceptor required for image-forming vision at low light intensity. While most salt water fish species use retinal as chromophore, most freshwater fish use 3-dehydroretinal, or a mixture of retinal and 3-dehydroretinal. Light-induced isomerization of 11-cis to all-trans retinal triggers a conformational change that activates signaling via G-proteins. Subsequent receptor phosphorylation mediates displacement of the bound G-protein alpha subunit by arrestin and terminates signaling. The chain is Rhodopsin (rho) from Chelon saliens (Leaping mullet).